The following is a 124-amino-acid chain: uncharacterized protein (124 aa).

Residues 1-18 form the signal peptide; it reads MHIIKTLISVGVAFSLSA. A lipid anchor (N-palmitoyl cysteine) is attached at Cys-19. A lipid anchor (S-diacylglycerol cysteine) is attached at Cys-19.

The protein resides in the cell membrane. This is an uncharacterized protein from Pasteurella multocida (strain Pm70).